Reading from the N-terminus, the 213-residue chain is Thymidylate kinase (213 aa).

10-17 (GLEGAGKT) lines the ATP pocket.

Belongs to the thymidylate kinase family.

The enzyme catalyses dTMP + ATP = dTDP + ADP. Its function is as follows. Phosphorylation of dTMP to form dTDP in both de novo and salvage pathways of dTTP synthesis. This Klebsiella pneumoniae (strain 342) protein is Thymidylate kinase.